Here is a 476-residue protein sequence, read N- to C-terminus: MIKKENLTYGKVHQVIGPVVDVIFSESKQLPRVYDCLSVQLKKSELFLEATQLIGDDIVRCIALGPTEGLARNVKVTNYNHPIEVPVGKNVLGRMFNVLGEPIDGKEPLPKKPKLSIHRNPPAFDEQPNTVDIFETGIKVIDLLTPYVRGGKIGLFGGAGVGKTVLVQELIHNIAKEHSGLSVFAGVGERTREGNDLYYEMIQGGVIDKTVLVFGQMNEPPGARMRVALTALTMAEYFRDHDNQNVLLFIDNIFRFTQAGSEVSALLGRMPSAVGYQPTLAIEMGKLQERIASTKTGSITSVQAIYVPADDLTDPAPATTFTHLDAKTVLDRNIAALGIFPAINPLESTSRLLDPSVVGINHYKVALGVQNILQRFAELQDIIAILGIDELSDEDKIIVERARRIRNFLSQPFFVAEKFSGIAGKYVSLNDTVQSFKEILEGKHDHLPEQAFFYVGTIQEAVEKAKRLNQEFDKTK.

157 to 164 (GGAGVGKT) is a binding site for ATP.

This sequence belongs to the ATPase alpha/beta chains family. In terms of assembly, F-type ATPases have 2 components, CF(1) - the catalytic core - and CF(0) - the membrane proton channel. CF(1) has five subunits: alpha(3), beta(3), gamma(1), delta(1), epsilon(1). CF(0) has three main subunits: a(1), b(2) and c(9-12). The alpha and beta chains form an alternating ring which encloses part of the gamma chain. CF(1) is attached to CF(0) by a central stalk formed by the gamma and epsilon chains, while a peripheral stalk is formed by the delta and b chains.

It is found in the cell membrane. It carries out the reaction ATP + H2O + 4 H(+)(in) = ADP + phosphate + 5 H(+)(out). Its function is as follows. Produces ATP from ADP in the presence of a proton gradient across the membrane. The catalytic sites are hosted primarily by the beta subunits. The sequence is that of ATP synthase subunit beta from Mycoplasma genitalium (strain ATCC 33530 / DSM 19775 / NCTC 10195 / G37) (Mycoplasmoides genitalium).